A 185-amino-acid chain; its full sequence is ATP synthase subunit b, chloroplastic (185 aa).

A helical transmembrane segment spans residues 31-53 (IINITVVLGILIYFGKGVLSNLL).

This sequence belongs to the ATPase B chain family. F-type ATPases have 2 components, F(1) - the catalytic core - and F(0) - the membrane proton channel. F(1) has five subunits: alpha(3), beta(3), gamma(1), delta(1), epsilon(1). F(0) has four main subunits: a(1), b(1), b'(1) and c(10-14). The alpha and beta chains form an alternating ring which encloses part of the gamma chain. F(1) is attached to F(0) by a central stalk formed by the gamma and epsilon chains, while a peripheral stalk is formed by the delta, b and b' chains.

It localises to the plastid. The protein localises to the chloroplast thylakoid membrane. In terms of biological role, f(1)F(0) ATP synthase produces ATP from ADP in the presence of a proton or sodium gradient. F-type ATPases consist of two structural domains, F(1) containing the extramembraneous catalytic core and F(0) containing the membrane proton channel, linked together by a central stalk and a peripheral stalk. During catalysis, ATP synthesis in the catalytic domain of F(1) is coupled via a rotary mechanism of the central stalk subunits to proton translocation. Component of the F(0) channel, it forms part of the peripheral stalk, linking F(1) to F(0). The sequence is that of ATP synthase subunit b, chloroplastic from Gnetum parvifolium (Small-leaved jointfir).